A 152-amino-acid chain; its full sequence is MANSERTFIAIKPDGVQRSLVGEIIKRFEQKGFRLIAMKLIQASEDLLKEHYIDLKDRPFFAGLVKYMQSGPVVAMVWEGLNVVKTGRVMLGETNPADSKPGTIRGDFCIQVGRNIIHGSDSVESAEKEIGLWFQPEELVDYKSCAQNWIYE.

The ATP site is built by Lys-12, Phe-60, Arg-88, and Thr-94. Lys-100 participates in a covalent cross-link: Glycyl lysine isopeptide (Lys-Gly) (interchain with G-Cter in ubiquitin). Positions 105 and 115 each coordinate ATP. The Pros-phosphohistidine intermediate role is filled by His-118. Phosphoserine occurs at positions 120, 122, and 125.

Belongs to the NDK family. As to quaternary structure, hexamer of two different chains: An and B (A6, A5B, A4B2, A3B3, A2B4, AB5, B6). Interacts with PRUNE1. Component of the SET complex, composed of at least ANP32A, APEX1, HMGB2, NME1, SET and TREX1. Within this complex, interacts directly with SET. Also interacts with TREX1, but only following translocation to the nucleus. Mg(2+) is required as a cofactor.

The protein localises to the cytoplasm. Its subcellular location is the nucleus. The catalysed reaction is a 2'-deoxyribonucleoside 5'-diphosphate + ATP = a 2'-deoxyribonucleoside 5'-triphosphate + ADP. It carries out the reaction a ribonucleoside 5'-diphosphate + ATP = a ribonucleoside 5'-triphosphate + ADP. With respect to regulation, autophosphorylation at His-118 increases serine/threonine protein kinase activity of the enzyme. Interaction with the SET complex inhibits exonuclease activity. In terms of biological role, major role in the synthesis of nucleoside triphosphates other than ATP. The ATP gamma phosphate is transferred to the NDP beta phosphate via a ping-pong mechanism, using a phosphorylated active-site intermediate. Possesses nucleoside-diphosphate kinase, serine/threonine-specific protein kinase, geranyl and farnesyl pyrophosphate kinase, histidine protein kinase and 3'-5' exonuclease activities. Involved in cell proliferation, differentiation and development, signal transduction, G protein-coupled receptor endocytosis, and gene expression. Required for neural development including neural patterning and cell fate determination. During GZMA-mediated cell death, works in concert with TREX1. NME1 nicks one strand of DNA and TREX1 removes bases from the free 3' end to enhance DNA damage and prevent DNA end reannealing and rapid repair. The polypeptide is Nucleoside diphosphate kinase A (NME1) (Canis lupus familiaris (Dog)).